A 500-amino-acid chain; its full sequence is Versicolorin B desaturase (500 aa).

Residues 3-23 (FLSLPSLVIVIPVGYLLFHLG) traverse the membrane as a helical segment. Asn-243 and Asn-400 each carry an N-linked (GlcNAc...) asparagine glycan. Position 438 (Cys-438) interacts with heme.

It belongs to the cytochrome P450 family. It depends on heme as a cofactor.

The protein localises to the membrane. The catalysed reaction is versicolorin B + NADPH + O2 + H(+) = versicolorin A + NADP(+) + 2 H2O. It functions in the pathway mycotoxin biosynthesis; aflatoxin biosynthesis. Versicolorin B desaturase; part of the gene cluster that mediates the biosynthesis of aflatoxins, a group of polyketide-derived furanocoumarins, and part of the most toxic and carcinogenic compounds among the known mycotoxins. The four major aflatoxins produced by A.parasiticus are aflatoxin B1 (AFB1), aflatoxin B2 (AFB2), aflatoxin G1 (AFG1) and aflatoxin G2 (AFG2). Within the aflatoxin pathway, the versicolorin B desaturase aflL catalyzes the conversion of versicolorin B (VERB) to versicolorin A (VERA). The biosynthesis of aflatoxins begins with the norsolorinic acid synthase aflC that combines a hexanoyl starter unit produced by the fatty acid synthase aflA/aflB and 7 malonyl-CoA extender units to synthesize the precursor NOR. The second step is the conversion of NOR to averantin and requires the norsolorinic acid ketoreductase aflD, which catalyzes the dehydration of norsolorinic acid to form (1'S)-averantin. The norsolorinic acid reductases aflE and aflF may also play a role in the conversion of NOR to AVN. The cytochrome P450 monooxygenase aflG then catalyzes the hydroxylation of AVN to 5'hydroxyaverantin (HAVN). The next step is performed by the 5'-hydroxyaverantin dehydrogenase aflH that transforms HAVN to 5'-oxoaverantin (OAVN) which is further converted to averufin (AVF) by aflK that plays a dual role in the pathway, as a 5'-oxoaverantin cyclase that mediates conversion of 5'-oxoaverantin, as well as a versicolorin B synthase in a later step in the pathway. The averufin oxidase aflI catalyzes the conversion of AVF to versiconal hemiacetal acetate (VHA). VHA is then the substrate for the versiconal hemiacetal acetate esterase aflJ to yield versiconal (VAL). Versicolorin B synthase aflK then converts VAL to versicolorin B (VERB) by closing the bisfuran ring of aflatoxin which is required for DNA-binding, thus giving to aflatoxin its activity as a mutagen. Then, the activity of the versicolorin B desaturase aflL leads to versicolorin A (VERA). A branch point starts from VERB since it can also be converted to dihydrodemethylsterigmatocystin (DMDHST), probably also by aflL, VERA being a precursor for aflatoxins B1 and G1, and DMDHST for aflatoxins B2 and G2. Next, the versicolorin reductase aflM and the cytochrome P450 monooxygenase aflN are involved in conversion of VERA to demethylsterigmatocystin (DMST). AflX and aflY seem also involved in this step, through probable aflX-mediated epoxide ring-opening step following versicolorin A oxidation and aflY-mediated Baeyer-Villiger oxidation required for the formation of the xanthone ring. The methyltransferase aflO then leads to the modification of DMST to sterigmatocystin (ST), and of DMDHST to dihydrosterigmatocystin (DHST). Both ST and DHST are then substrates of the O-methyltransferase aflP to yield O-methylsterigmatocystin (OMST) and dihydro-O-methylsterigmatocystin (DHOMST), respectively. Finally OMST is converted to aflatoxins B1 and G1, and DHOMST to aflatoxins B2 and G2, via the action of several enzymes including O-methylsterigmatocystin oxidoreductase aflQ, the cytochrome P450 monooxygenase aflU, but also the NADH-dependent flavin oxidoreductase nadA which is specifically required for the synthesis of AFG1. This chain is Versicolorin B desaturase, found in Aspergillus parasiticus (strain ATCC 56775 / NRRL 5862 / SRRC 143 / SU-1).